The sequence spans 331 residues: CRISPR-associated endonuclease Cas1 (331 aa).

Glu155, His221, and Glu236 together coordinate Mn(2+).

Belongs to the CRISPR-associated endonuclease Cas1 family. Homodimer, forms a heterotetramer with a Cas2 homodimer. The cofactor is Mg(2+). Mn(2+) serves as cofactor.

CRISPR (clustered regularly interspaced short palindromic repeat), is an adaptive immune system that provides protection against mobile genetic elements (viruses, transposable elements and conjugative plasmids). CRISPR clusters contain spacers, sequences complementary to antecedent mobile elements, and target invading nucleic acids. CRISPR clusters are transcribed and processed into CRISPR RNA (crRNA). Acts as a dsDNA endonuclease. Involved in the integration of spacer DNA into the CRISPR cassette. This is CRISPR-associated endonuclease Cas1 from Methanopyrus kandleri (strain AV19 / DSM 6324 / JCM 9639 / NBRC 100938).